The following is a 420-amino-acid chain: Light-independent protochlorophyllide reductase subunit N (420 aa).

[4Fe-4S] cluster contacts are provided by cysteine 21, cysteine 46, and cysteine 103.

This sequence belongs to the BchN/ChlN family. As to quaternary structure, protochlorophyllide reductase is composed of three subunits; BchL, BchN and BchB. Forms a heterotetramer of two BchB and two BchN subunits. The cofactor is [4Fe-4S] cluster.

It catalyses the reaction chlorophyllide a + oxidized 2[4Fe-4S]-[ferredoxin] + 2 ADP + 2 phosphate = protochlorophyllide a + reduced 2[4Fe-4S]-[ferredoxin] + 2 ATP + 2 H2O. It participates in porphyrin-containing compound metabolism; bacteriochlorophyll biosynthesis (light-independent). In terms of biological role, component of the dark-operative protochlorophyllide reductase (DPOR) that uses Mg-ATP and reduced ferredoxin to reduce ring D of protochlorophyllide (Pchlide) to form chlorophyllide a (Chlide). This reaction is light-independent. The NB-protein (BchN-BchB) is the catalytic component of the complex. The protein is Light-independent protochlorophyllide reductase subunit N of Chlorobium luteolum (strain DSM 273 / BCRC 81028 / 2530) (Pelodictyon luteolum).